The primary structure comprises 365 residues: Oligosaccharides import ATP-binding protein MsmX (365 aa).

Residues 4–235 enclose the ABC transporter domain; that stretch reads LRMEHIYKFY…PENVFVGGFI (232 aa). 37-44 contributes to the ATP binding site; it reads GPSGCGKS.

Belongs to the ABC transporter superfamily. As to quaternary structure, the complex involved in maltodextrin import is composed of two ATP-binding proteins (MsmX), two transmembrane proteins (MdxF and MdxG) and a solute-binding protein (MdxE). The complex involved in arabinooligosaccharides uptake is composed of two ATP-binding proteins (MsmX), two transmembrane proteins (AraP and AraQ) and a solute-binding protein (AraN). The complex involved in galactooligosaccharides uptake is composed of two ATP-binding proteins (MsmX), two transmembrane proteins (GanP and GanQ) and a solute-binding protein (GanS). The complex involved in melibiose, raffinose and stachyose import is composed of two ATP-binding proteins (MsmX), two transmembrane proteins (MelC and MelD) and a solute-binding protein (MelE). The complex involved in polygalacturonan and rhamnogalacturonan type I uptake is probably composed of two ATP-binding proteins (MsmX), two transmembrane proteins (YtcP and YteP) and a solute-binding protein (YtcQ).

The protein resides in the cell membrane. Functionally, required to energize different ABC-type saccharide transporters. Part of the MdxEFG-MsmX ABC transporter complex involved in maltodextrin import, of the AraNPQ-MsmX complex involved in arabinooligosaccharides import, of the GanPQS-MsmX complex involved in galactooligosaccharides import, and of the MelEDC-MsmX complex involved in melibiose, raffinose and stachyose import. Is probably also part of the ABC transporter complex YtcQP-YteP-MsmX involved in polygalacturonan and rhamnogalacturonan type I import during pectin degradation. Responsible for energy coupling to the transport system. In Bacillus subtilis (strain 168), this protein is Oligosaccharides import ATP-binding protein MsmX (msmX).